Reading from the N-terminus, the 442-residue chain is Coiled-coil domain-containing protein 91 (442 aa).

A GGA1-binding motif region spans residues 1–16 (MDDDDFGGFEAAETFD). The interval 1-27 (MDDDDFGGFEAAETFDGEQGGNQAVSP) is disordered. Phosphoserine is present on residues S43 and S46. The segment at 48-79 (ELILDHDRSSPSSGHLRSDAVISSPDDTRADS) is disordered. Coiled-coil stretches lie at residues 127-213 (GVHV…ALSI) and 248-409 (CEEL…RLDQ). A homodimerization region spans residues 211-414 (LSIIVDEYKA…RRLDQVTRQR (204 aa)).

In terms of assembly, homodimer. Interacts with GGA1, GGA2 and AP1G1.

Its subcellular location is the membrane. It localises to the golgi apparatus. The protein resides in the trans-Golgi network membrane. It is found in the trans-Golgi network. Involved in the regulation of membrane traffic through the trans-Golgi network (TGN). Functions in close cooperation with the GGAs in the sorting of hydrolases to lysosomes. The polypeptide is Coiled-coil domain-containing protein 91 (Ccdc91) (Rattus norvegicus (Rat)).